The following is a 59-amino-acid chain: Potassium channel toxin alpha-KTx 15.5 (59 aa).

The N-terminal stretch at 1-22 (MKFSSIILLTLLICSMSIFGNC) is a signal peptide. Gln-23 bears the Pyrrolidone carboxylic acid mark. 3 disulfides stabilise this stretch: Cys-30/Cys-50, Cys-35/Cys-55, and Cys-39/Cys-57.

The protein belongs to the short scorpion toxin superfamily. Potassium channel inhibitor family. Alpha-KTx 15 subfamily. In terms of tissue distribution, expressed by the venom gland.

It localises to the secreted. Its function is as follows. Blocker of A-type voltage-gated potassium channels of cerebellar granular cells. May also inhibit Kv4/KCND when coexpressed with DPP6 or DPP10. The occlusion of the outer entry of the K(+) conducting pore is partially reversible and affects both open and closed channels. It shares the same target in rat brain than BmTX3 (AC Q8I0L5) and AmmTX3 (AC P60208). This chain is Potassium channel toxin alpha-KTx 15.5, found in Androctonus australis (Sahara scorpion).